A 156-amino-acid chain; its full sequence is MSSRFARSNGNPNHIRKRNHSPDPIGIDNYKRKRLIIDLENLSLNDKGPKNGHADDNNLIHNNIVFTDAIDDKVLKEIIKCSTSKRGDNDLFYDKIWERLREKRLQIIKWVDYKEIAYLSWWKWFHNQMTSKYTYDGEADTDVEMMAVDTDVDMDA.

A compositionally biased stretch (polar residues) spans 1–12 (MSSRFARSNGNP). Residues 1 to 27 (MSSRFARSNGNPNHIRKRNHSPDPIGI) are disordered. Residue S21 is modified to Phosphoserine.

It is found in the cytoplasm. Its subcellular location is the nucleus. This is an uncharacterized protein from Saccharomyces cerevisiae (strain ATCC 204508 / S288c) (Baker's yeast).